The following is a 186-amino-acid chain: Elongation factor P (186 aa).

It belongs to the elongation factor P family.

It is found in the cytoplasm. Its pathway is protein biosynthesis; polypeptide chain elongation. Its function is as follows. Involved in peptide bond synthesis. Stimulates efficient translation and peptide-bond synthesis on native or reconstituted 70S ribosomes in vitro. Probably functions indirectly by altering the affinity of the ribosome for aminoacyl-tRNA, thus increasing their reactivity as acceptors for peptidyl transferase. The chain is Elongation factor P from Polynucleobacter asymbioticus (strain DSM 18221 / CIP 109841 / QLW-P1DMWA-1) (Polynucleobacter necessarius subsp. asymbioticus).